We begin with the raw amino-acid sequence, 40 residues long: Photosystem II reaction center protein J (40 aa).

The chain crosses the membrane as a helical span at residues 8–28; sequence IPLWLIGTVAGIPVIGSVGVF.

It belongs to the PsbJ family. In terms of assembly, PSII is composed of 1 copy each of membrane proteins PsbA, PsbB, PsbC, PsbD, PsbE, PsbF, PsbH, PsbI, PsbJ, PsbK, PsbL, PsbM, PsbT, PsbX, PsbY, PsbZ, Psb30/Ycf12, at least 3 peripheral proteins of the oxygen-evolving complex and a large number of cofactors. It forms dimeric complexes.

Its subcellular location is the plastid. It localises to the chloroplast thylakoid membrane. One of the components of the core complex of photosystem II (PSII). PSII is a light-driven water:plastoquinone oxidoreductase that uses light energy to abstract electrons from H(2)O, generating O(2) and a proton gradient subsequently used for ATP formation. It consists of a core antenna complex that captures photons, and an electron transfer chain that converts photonic excitation into a charge separation. This Acorus calamus (Sweet flag) protein is Photosystem II reaction center protein J.